A 382-amino-acid chain; its full sequence is Histidinol-phosphate aminotransferase (382 aa).

The segment at 1–24 is disordered; it reads MTSAPRPRPTLDDLPLREDLRGKS. The segment covering 9–22 has biased composition (basic and acidic residues); sequence PTLDDLPLREDLRG. An N6-(pyridoxal phosphate)lysine modification is found at Lys-233.

The protein belongs to the class-II pyridoxal-phosphate-dependent aminotransferase family. Histidinol-phosphate aminotransferase subfamily. As to quaternary structure, homodimer. Pyridoxal 5'-phosphate serves as cofactor.

It carries out the reaction L-histidinol phosphate + 2-oxoglutarate = 3-(imidazol-4-yl)-2-oxopropyl phosphate + L-glutamate. It participates in amino-acid biosynthesis; L-histidine biosynthesis; L-histidine from 5-phospho-alpha-D-ribose 1-diphosphate: step 7/9. This chain is Histidinol-phosphate aminotransferase, found in Mycobacterium ulcerans (strain Agy99).